Consider the following 110-residue polypeptide: Large ribosomal subunit protein uL22 (110 aa).

Belongs to the universal ribosomal protein uL22 family. Part of the 50S ribosomal subunit.

Functionally, this protein binds specifically to 23S rRNA; its binding is stimulated by other ribosomal proteins, e.g. L4, L17, and L20. It is important during the early stages of 50S assembly. It makes multiple contacts with different domains of the 23S rRNA in the assembled 50S subunit and ribosome. Its function is as follows. The globular domain of the protein is located near the polypeptide exit tunnel on the outside of the subunit, while an extended beta-hairpin is found that lines the wall of the exit tunnel in the center of the 70S ribosome. In Actinobacillus pleuropneumoniae serotype 5b (strain L20), this protein is Large ribosomal subunit protein uL22.